Consider the following 286-residue polypeptide: Phycobilisome 32.1 kDa linker polypeptide, phycocyanin-associated, rod (286 aa).

The PBS-linker domain occupies 2 to 180 (AITTAASRLG…LYRGYANSDR (179 aa)). Residues 234–286 (DRVYRLEVTGIRSPGYPSVRRSSTVFIVPYERLSDKIQQVHKQGGKIVSVTSA) form the CpcD-like domain.

The protein belongs to the phycobilisome linker protein family. As to quaternary structure, associated with the phycobilisome, a hemidiscoidal structure that is composed of two distinct substructures: a core complex and a number of rods radiating from the core.

It is found in the cellular thylakoid membrane. Functionally, rod linker protein, associated with phycocyanin. Linker polypeptides determine the state of aggregation and the location of the disk-shaped phycobiliprotein units within the phycobilisome and modulate their spectroscopic properties in order to mediate a directed and optimal energy transfer. In Nostoc sp. (strain PCC 7120 / SAG 25.82 / UTEX 2576), this protein is Phycobilisome 32.1 kDa linker polypeptide, phycocyanin-associated, rod (cpcC).